The primary structure comprises 981 residues: Mediator of RNA polymerase II transcription subunit 5 (981 aa).

Belongs to the Mediator complex subunit 5 family. Component of the Mediator complex.

The protein localises to the nucleus. Component of the Mediator complex, a coactivator involved in the regulated transcription of nearly all RNA polymerase II-dependent genes. Mediator functions as a bridge to convey information from gene-specific regulatory proteins to the basal RNA polymerase II transcription machinery. Mediator is recruited to promoters by direct interactions with regulatory proteins and serves as a scaffold for the assembly of a functional preinitiation complex with RNA polymerase II and the general transcription factors. In Scheffersomyces stipitis (strain ATCC 58785 / CBS 6054 / NBRC 10063 / NRRL Y-11545) (Yeast), this protein is Mediator of RNA polymerase II transcription subunit 5 (NUT1).